A 324-amino-acid polypeptide reads, in one-letter code: MSVSAAVAAASTSRTLVLARHRSPPASRVAATSRGRPFSSGPHPLAVSPATRAPAMATDGAAAAAAAGSKKKKEVLIFDAEEDLAVSLAKYTAELSAKLAAERGAFTVVLSGGSLIKNIRKLAEPPYLDSVDWSKWHVFWVDERVVPKDHEDSNYKLALDGFLSKVPIPTGQVYAINDALSAEGAADDYETCLKQLVKNGVIAMSQSTGFPRFDVMLLGMGPDGHIASLFPGHPLVNENKKWVTYIKDSPKPPPERITFTFPVINSSAYVAMVVTGAGKAGAVQKALSDKQTSSDLLPVEMAVLQDGEFTWFTDKPAVSMLQNK.

Residues 1–63 (MSVSAAVAAA…PAMATDGAAA (63 aa)) constitute a chloroplast transit peptide. A disordered region spans residues 19–43 (ARHRSPPASRVAATSRGRPFSSGPH).

It belongs to the glucosamine/galactosamine-6-phosphate isomerase family. 6-phosphogluconolactonase subfamily.

It localises to the plastid. Its subcellular location is the chloroplast. It carries out the reaction 6-phospho-D-glucono-1,5-lactone + H2O = 6-phospho-D-gluconate + H(+). Its pathway is carbohydrate degradation; pentose phosphate pathway; D-ribulose 5-phosphate from D-glucose 6-phosphate (oxidative stage): step 2/3. Hydrolysis of 6-phosphogluconolactone to 6-phosphogluconate. The chain is Probable 6-phosphogluconolactonase 4, chloroplastic from Oryza sativa subsp. japonica (Rice).